The following is a 376-amino-acid chain: N-acetyldiaminopimelate deacetylase (376 aa).

Asp-70 is a catalytic residue. Glu-129 serves as the catalytic Proton acceptor.

It belongs to the peptidase M20A family. N-acetyldiaminopimelate deacetylase subfamily.

It catalyses the reaction N-acetyl-(2S,6S)-2,6-diaminopimelate + H2O = (2S,6S)-2,6-diaminopimelate + acetate. It participates in amino-acid biosynthesis; L-lysine biosynthesis via DAP pathway; LL-2,6-diaminopimelate from (S)-tetrahydrodipicolinate (acetylase route): step 3/3. Functionally, catalyzes the conversion of N-acetyl-diaminopimelate to diaminopimelate and acetate. This Bacillus pumilus (strain SAFR-032) protein is N-acetyldiaminopimelate deacetylase.